Consider the following 35-residue polypeptide: Sperm-specific protein Phi-1 (35 aa).

Composition is skewed to basic residues over residues 1-17 (PSPT…RSRS) and 25-35 (AAKRAKSKTAK). Residues 1-35 (PSPTRRSKSRSKSRSRSRSASAGKAAKRAKSKTAK) are disordered.

In terms of tissue distribution, sperm.

Its subcellular location is the nucleus. The protein resides in the chromosome. In terms of biological role, involved in nuclear basic protein transition: histones are replaced by spermatid specific proteins which are themselves replaced by protamines in late spermatids. This is Sperm-specific protein Phi-1 from Mytilus californianus (California mussel).